A 205-amino-acid chain; its full sequence is Arginine exporter protein ArgO (205 aa).

The next 6 helical transmembrane spans lie at 1-21, 37-57, 68-88, 112-132, 147-167, and 182-202; these read MLAV…PLGP, LMVA…GIFG, LLAL…WGAF, VVTM…TFVV, WFAL…ALLA, and IINT…AWQG.

It belongs to the LysE/ArgO transporter (TC 2.A.75) family.

It localises to the cell inner membrane. The catalysed reaction is L-arginine(in) = L-arginine(out). Functionally, involved in the export of arginine. Important to control the intracellular level of arginine and the correct balance between arginine and lysine. This chain is Arginine exporter protein ArgO, found in Serratia proteamaculans (strain 568).